A 98-amino-acid polypeptide reads, in one-letter code: Large ribosomal subunit protein bL28 (98 aa).

As to quaternary structure, part of the 50S ribosomal subunit.

This is Large ribosomal subunit protein bL28 (rpmB) from Thermus thermophilus (strain ATCC 27634 / DSM 579 / HB8).